The primary structure comprises 406 residues: Phosphatidylserine decarboxylase proenzyme, mitochondrial (406 aa).

The N-terminal 49 residues, 1-49 (MAVAGGRGCVRSLREGVLWRSSPCHCDYTATRHFLGALQKLPLQAWVRK), are a transit peptide targeting the mitochondrion. At 50 to 60 (VHTAPLRTLFL) the chain is on the mitochondrial matrix side. Residues 61–79 (LRPVPILLAAGGGYAGYRQ) traverse the membrane as a helical segment. The Mitochondrial intermembrane portion of the chain corresponds to 80–406 (YEKYRERQLE…ILFGEALGSL (327 aa)). Catalysis depends on charge relay system; for autoendoproteolytic cleavage activity residues D188, H264, and S375. S375 (schiff-base intermediate with substrate; via pyruvic acid; for decarboxylase activity) is an active-site residue. S375 is subject to Pyruvic acid (Ser); by autocatalysis.

The protein belongs to the phosphatidylserine decarboxylase family. PSD-B subfamily. Eukaryotic type I sub-subfamily. In terms of assembly, heterodimer of a large membrane-associated beta subunit and a small pyruvoyl-containing alpha subunit. It depends on pyruvate as a cofactor. Post-translationally, is synthesized initially as an inactive proenzyme. Formation of the active enzyme involves a self-maturation process in which the active site pyruvoyl group is generated from an internal serine residue via an autocatalytic post-translational modification. Two non-identical subunits are generated from the proenzyme in this reaction, and the pyruvate is formed at the N-terminus of the alpha chain, which is derived from the carboxyl end of the proenzyme. The autoendoproteolytic cleavage occurs by a canonical serine protease mechanism, in which the side chain hydroxyl group of the serine supplies its oxygen atom to form the C-terminus of the beta chain, while the remainder of the serine residue undergoes an oxidative deamination to produce ammonia and the pyruvoyl prosthetic group on the alpha chain. During this reaction, the Ser that is part of the protease active site of the proenzyme becomes the pyruvoyl prosthetic group, which constitutes an essential element of the active site of the mature decarboxylase.

Its subcellular location is the mitochondrion inner membrane. The protein resides in the cytoplasm. The protein localises to the lipid droplet. The catalysed reaction is a 1,2-diacyl-sn-glycero-3-phospho-L-serine + H(+) = a 1,2-diacyl-sn-glycero-3-phosphoethanolamine + CO2. It functions in the pathway phospholipid metabolism; phosphatidylethanolamine biosynthesis. With respect to regulation, inhibited by hydroxylamine. Functionally, catalyzes the formation of phosphatidylethanolamine (PtdEtn) from phosphatidylserine (PtdSer). Plays a central role in phospholipid metabolism and in the interorganelle trafficking of phosphatidylserine. May be involved in lipid droplet biogenesis at the endoplasmic reticulum membrane. This chain is Phosphatidylserine decarboxylase proenzyme, mitochondrial, found in Rattus norvegicus (Rat).